We begin with the raw amino-acid sequence, 219 residues long: Mediator of RNA polymerase II transcription subunit 20b (219 aa).

This sequence belongs to the Mediator complex subunit 20 family. In terms of assembly, component of the Mediator complex.

It is found in the nucleus. In terms of biological role, component of the Mediator complex, a coactivator involved in the regulated transcription of nearly all RNA polymerase II-dependent genes. Mediator functions as a bridge to convey information from gene-specific regulatory proteins to the basal RNA polymerase II transcription machinery. The Mediator complex, having a compact conformation in its free form, is recruited to promoters by direct interactions with regulatory proteins and serves for the assembly of a functional preinitiation complex with RNA polymerase II and the general transcription factors. This chain is Mediator of RNA polymerase II transcription subunit 20b (MED20B), found in Arabidopsis thaliana (Mouse-ear cress).